The sequence spans 244 residues: Aspartate/glutamate leucyltransferase (244 aa).

It belongs to the R-transferase family. Bpt subfamily.

Its subcellular location is the cytoplasm. It catalyses the reaction N-terminal L-glutamyl-[protein] + L-leucyl-tRNA(Leu) = N-terminal L-leucyl-L-glutamyl-[protein] + tRNA(Leu) + H(+). The catalysed reaction is N-terminal L-aspartyl-[protein] + L-leucyl-tRNA(Leu) = N-terminal L-leucyl-L-aspartyl-[protein] + tRNA(Leu) + H(+). Functionally, functions in the N-end rule pathway of protein degradation where it conjugates Leu from its aminoacyl-tRNA to the N-termini of proteins containing an N-terminal aspartate or glutamate. This chain is Aspartate/glutamate leucyltransferase, found in Bordetella bronchiseptica (strain ATCC BAA-588 / NCTC 13252 / RB50) (Alcaligenes bronchisepticus).